We begin with the raw amino-acid sequence, 733 residues long: Ribosomal protein S6 kinase alpha-2 (733 aa).

In terms of domain architecture, Protein kinase 1 spans phenylalanine 59–phenylalanine 318. Residues leucine 65–valine 73 and lysine 91 each bind ATP. The active-site Proton acceptor is aspartate 184. Serine 218 is modified (phosphoserine; by PDPK1). The region spanning valine 319–serine 388 is the AGC-kinase C-terminal domain. Residue serine 377 is modified to Phosphoserine. A Protein kinase 2 domain is found at tyrosine 415–isoleucine 672. ATP is bound by residues isoleucine 421–cysteine 429 and lysine 444. The active-site Proton acceptor is aspartate 532.

It belongs to the protein kinase superfamily. AGC Ser/Thr protein kinase family. S6 kinase subfamily. As to quaternary structure, forms a complex with either MAPK1/ERK2 or MAPK3/ERK1 in quiescent cells. Transiently dissociates following mitogenic stimulation. Interacts with FBXO5; cooperate to induce the metaphase arrest of early blastomeres; increases and stabilizes interaction of FBXO5 with CDC20. Mg(2+) is required as a cofactor. In terms of processing, activated by phosphorylation at Ser-218 by PDPK1. Autophosphorylated on Ser-377, as part of the activation process. May be phosphorylated at Thr-356 and Ser-360 by MAPK1/ERK2 and MAPK3/ERK1. N-terminal myristoylation results in an activated kinase in the absence of added growth factors.

Its subcellular location is the nucleus. It localises to the cytoplasm. The catalysed reaction is L-seryl-[protein] + ATP = O-phospho-L-seryl-[protein] + ADP + H(+). It carries out the reaction L-threonyl-[protein] + ATP = O-phospho-L-threonyl-[protein] + ADP + H(+). Its activity is regulated as follows. Upon extracellular signal or mitogen stimulation, phosphorylated at Thr-570 in the C-terminal kinase domain (CTKD) by MAPK1/ERK2 and MAPK3/ERK1. The activated CTKD then autophosphorylates Ser-377, allowing binding of PDPK1, which in turn phosphorylates Ser-218 in the N-terminal kinase domain (NTDK) leading to the full activation of the protein and subsequent phosphorylation of the substrates by the NTKD. Serine/threonine-protein kinase that acts downstream of ERK (MAPK1/ERK2 and MAPK3/ERK1) signaling and mediates mitogenic and stress-induced activation of transcription factors, regulates translation, and mediates cellular proliferation, survival, and differentiation. May function as tumor suppressor in epithelial ovarian cancer cells. This chain is Ribosomal protein S6 kinase alpha-2 (Rps6ka2), found in Mus musculus (Mouse).